The chain runs to 138 residues: Cysteine desulfuration protein SufE (138 aa).

Cysteine 51 serves as the catalytic Cysteine persulfide intermediate.

This sequence belongs to the SufE family. Homodimer. Interacts with SufS.

The protein resides in the cytoplasm. The protein operates within cofactor biosynthesis; iron-sulfur cluster biosynthesis. Functionally, participates in cysteine desulfuration mediated by SufS. Cysteine desulfuration mobilizes sulfur from L-cysteine to yield L-alanine and constitutes an essential step in sulfur metabolism for biosynthesis of a variety of sulfur-containing biomolecules. Functions as a sulfur acceptor for SufS, by mediating the direct transfer of the sulfur atom from the S-sulfanylcysteine of SufS, an intermediate product of cysteine desulfuration process. The sequence is that of Cysteine desulfuration protein SufE from Salmonella agona (strain SL483).